We begin with the raw amino-acid sequence, 294 residues long: Putative inactive magnesium transporter MRS2-8 (294 aa).

The stretch at K179 to K216 forms a coiled coil.

The protein belongs to the CorA metal ion transporter (MIT) (TC 1.A.35.5) family.

The protein is Putative inactive magnesium transporter MRS2-8 (MRS2-8) of Arabidopsis thaliana (Mouse-ear cress).